The chain runs to 150 residues: UPF0208 membrane protein VS_0999 (150 aa).

A run of 2 helical transmembrane segments spans residues 42 to 62 (FGVK…MVFN) and 70 to 90 (AVVM…WLGN).

This sequence belongs to the UPF0208 family.

It is found in the cell inner membrane. This Vibrio atlanticus (strain LGP32) (Vibrio splendidus (strain Mel32)) protein is UPF0208 membrane protein VS_0999.